A 359-amino-acid polypeptide reads, in one-letter code: 4-galactosyl-N-acetylglucosaminide 3-alpha-L-fucosyltransferase FUT6 (359 aa).

The Cytoplasmic portion of the chain corresponds to 1–14 (MDPLGPAKPQWSCR). Residues 15 to 34 (CCLTTLLFQLLVAVCFFSYL) form a helical; Signal-anchor for type II membrane protein membrane-spanning segment. Residues 35 to 359 (RVSRDDPTVY…QTRSITAWFT (325 aa)) are Lumenal-facing. N-linked (GlcNAc...) asparagine glycosylation is found at N46, N91, N153, and N184. Residues 73 to 112 (KPTALPRCSEMLPGTADCNITADRKVYPQADAVIVHHREV) are determines site-specific fucosylation.

It belongs to the glycosyltransferase 10 family. In terms of assembly, homodimer and monomer. Monomer (secreted form). N-glycosylated. In terms of processing, proteolytic cleavage releases a secreted glycoform of 43 kDa.

Its subcellular location is the golgi apparatus. It localises to the golgi stack membrane. The protein resides in the secreted. It carries out the reaction a beta-D-galactosyl-(1-&gt;4)-N-acetyl-beta-D-glucosaminyl derivative + GDP-beta-L-fucose = a beta-D-galactosyl-(1-&gt;4)-[alpha-L-fucosyl-(1-&gt;3)]-N-acetyl-beta-D-glucosaminyl derivative + GDP + H(+). It catalyses the reaction an N-acetyl-alpha-neuraminyl-(2-&gt;3)-beta-D-galactosyl-(1-&gt;4)-N-acetyl-beta-D-glucosaminyl derivative + GDP-beta-L-fucose = an alpha-Neu5Ac-(2-&gt;3)-beta-D-Gal-(1-&gt;4)-[alpha-L-Fuc-(1-&gt;3)]-beta-D-GlcNAc derivative + GDP + H(+). The enzyme catalyses an alpha-Neu5Ac-(2-&gt;3)-beta-D-Gal-(1-&gt;4)-beta-D-GlcNAc-(1-&gt;3)-beta-D-Gal-(1-&gt;4)-[alpha-L-Fuc-(1-&gt;3)]-beta-D-GlcNAc derivative + GDP-beta-L-fucose = an alpha-Neu5Ac-(2-&gt;3)-beta-D-Gal-(1-&gt;4)-[alpha-L-Fuc-(1-&gt;3)]-beta-D-GlcNAc-(1-&gt;3)-beta-D-Gal-(1-&gt;4)-[alpha-L-Fuc-(1-&gt;3)]-beta-D-GlcNAc derivative + GDP + H(+). The catalysed reaction is a neolactoside nLc6Cer + GDP-beta-L-fucose = beta-D-Gal-(1-&gt;4)-[alpha-L-Fuc-(1-&gt;3)]-beta-D-GlcNAc-(1-&gt;3)-beta-D-Gal-(1-&gt;4)-beta-D-GlcNAc-(1-&gt;3)-beta-D-Gal-(1-&gt;4)-beta-D-Glc-(1&lt;-&gt;1')-Cer + GDP + H(+). It carries out the reaction a neolactoside nLc6Cer + GDP-beta-L-fucose = beta-D-galactosyl-(1-&gt;4)-N-acetyl-beta-D-glucosaminyl-(1-&gt;3)-beta-D-galactosyl-(1-&gt;4)-[alpha-L-fucosyl-(1-&gt;3)]-N-acetyl-beta-D-glucosaminyl-(1-&gt;3)-beta-D-galactosyl-(1-&gt;4)-beta-D-glucosyl-(1&lt;-&gt;1')-ceramide + GDP + H(+). It catalyses the reaction a neolactoside VI(3)-alpha-NeuNAc-nLc6Cer + GDP-beta-L-fucose = a neolactoside VI(3)-alpha-NeuAc,V(3)-alphaFuc-nLc6Cer + GDP + H(+). The enzyme catalyses beta-D-galactosyl-(1-&gt;4)-N-acetyl-D-glucosamine + GDP-beta-L-fucose = beta-D-galactosyl-(1-&gt;4)-[alpha-L-fucosyl-(1-&gt;3)]-N-acetyl-D-glucosamine + GDP + H(+). The catalysed reaction is N-acetyl-alpha-neuraminosyl-(2-&gt;3)-beta-D-galactosyl-(1-&gt;4)-N-acetyl-beta-D-glucosamine + GDP-beta-L-fucose = N-acetyl-alpha-neuraminosyl-(2-&gt;3)-beta-D-galactosyl-(1-&gt;4)-[alpha-L-fucosyl-(1-&gt;3)]-N-acetyl-beta-D-glucosamine + GDP + H(+). It carries out the reaction lactose + GDP-beta-L-fucose = beta-D-galactosyl-(1-&gt;4)-[alpha-L-fucosyl-(1-&gt;3)]-D-glucose + GDP + H(+). It catalyses the reaction alpha-L-Fuc-(1-&gt;2)-beta-D-Gal-(1-&gt;4)-D-Glc + GDP-beta-L-fucose = alpha-L-Fuc-(1-&gt;2)-beta-D-Gal-(1-&gt;4)-[alpha-L-Fuc-(1-&gt;3)]-D-Glc + GDP + H(+). The enzyme catalyses a beta-D-galactosyl-(1-&gt;4)-N-acetyl-beta-D-6-sulfooxy-glucosaminyl derivative + GDP-beta-L-fucose = a beta-D-galactosyl-(1-&gt;4)-[alpha-L-fucosyl-(1-&gt;3)]-N-acetyl-beta-D-6-sulfooxy-glucosaminyl derivative + GDP + H(+). The protein operates within protein modification; protein glycosylation. Its function is as follows. Catalyzes the transfer of L-fucose, from a guanosine diphosphate-beta-L-fucose, to the N-acetyl glucosamine (GlcNAc) of a distal alpha2,3 sialylated lactosamine unit of a glycoprotein- or glycolipid-linked sialopolylactosamines chain or of a distal or internal lactosamine unit of a neutral glycoprotein- or glycolipid-linked polylactosamines chain through an alpha-1,3 glycosidic linkage and participates in surface expression of the sialyl Lewis X (sLe(x)), Lewis X (Le(x)) and non sialylated VIM2 determinants. Moreover transfers fucose to H-type 2 (Fucalpha1-2Galbeta1-4GlcNAc) chain acceptor substrates and participates in difucosylated sialyl Lewis x determinants. Also fucosylates a polylactosamine substrate having a 6 sulfate modification at the GlcNAc moiety and gives rise to sialyl and non-sialyl 6-sulfo lewis X. Does not have activity towards type 1 ((Galbeta1-3GlcNAc)) and H-type 1 chain (Fucalpha1-2Galbeta1-3GlcNAc) acceptors substrates. The protein is 4-galactosyl-N-acetylglucosaminide 3-alpha-L-fucosyltransferase FUT6 of Gorilla gorilla gorilla (Western lowland gorilla).